The primary structure comprises 312 residues: Ornithine carbamoyltransferase (312 aa).

Carbamoyl phosphate-binding positions include 57–60, Gln-84, Arg-108, and 135–138; these read STRT and HPCQ. Residues Asn-166, Asp-226, and 230–231 contribute to the L-ornithine site; that span reads SM. Residues 265–266 and Arg-293 contribute to the carbamoyl phosphate site; that span reads CL.

Belongs to the aspartate/ornithine carbamoyltransferase superfamily. OTCase family.

The protein resides in the cytoplasm. It carries out the reaction carbamoyl phosphate + L-ornithine = L-citrulline + phosphate + H(+). The protein operates within amino-acid biosynthesis; L-arginine biosynthesis; L-arginine from L-ornithine and carbamoyl phosphate: step 1/3. Functionally, reversibly catalyzes the transfer of the carbamoyl group from carbamoyl phosphate (CP) to the N(epsilon) atom of ornithine (ORN) to produce L-citrulline. This chain is Ornithine carbamoyltransferase, found in Brucella suis biovar 1 (strain 1330).